Consider the following 252-residue polypeptide: PF03932 family protein CutC (252 aa).

This sequence belongs to the CutC family.

The protein localises to the cytoplasm. The protein is PF03932 family protein CutC of Sodalis glossinidius (strain morsitans).